Reading from the N-terminus, the 691-residue chain is Elongation factor G (691 aa).

Residues 8–282 (EKTRNIGIMA…AVVDYLPSPV (275 aa)) enclose the tr-type G domain. Residues 17-24 (AHIDAGKT), 81-85 (DTPGH), and 135-138 (NKMD) each bind GTP.

It belongs to the TRAFAC class translation factor GTPase superfamily. Classic translation factor GTPase family. EF-G/EF-2 subfamily.

The protein localises to the cytoplasm. Functionally, catalyzes the GTP-dependent ribosomal translocation step during translation elongation. During this step, the ribosome changes from the pre-translocational (PRE) to the post-translocational (POST) state as the newly formed A-site-bound peptidyl-tRNA and P-site-bound deacylated tRNA move to the P and E sites, respectively. Catalyzes the coordinated movement of the two tRNA molecules, the mRNA and conformational changes in the ribosome. The sequence is that of Elongation factor G from Caldicellulosiruptor saccharolyticus (strain ATCC 43494 / DSM 8903 / Tp8T 6331).